The following is a 610-amino-acid chain: Solute carrier family 23 member 3 (610 aa).

Over residues 1 to 16 (MSRSPLNPSQLRSVGS) the composition is skewed to polar residues. The disordered stretch occupies residues 1–32 (MSRSPLNPSQLRSVGSQDALAPLPPPAPQNPS). At 1 to 49 (MSRSPLNPSQLRSVGSQDALAPLPPPAPQNPSTHSWDPLCGSLPWGLSC) the chain is on the cytoplasmic side. A helical membrane pass occupies residues 50–70 (LLALQHVLVMASLLCVSHLLL). At 71–85 (LCSLSPGGLSYSPSQ) the chain is on the extracellular side. A helical transmembrane segment spans residues 86-106 (LLASSFFSCGMSTILQTWMGS). At 107–164 (RLPLVQAPSLEFLIPALVLTSQKLPRAIQTPGNSSLMLHLCRGPSCHGLGHWNTSLQE) the chain is on the cytoplasmic side. Residues 165-185 (VSGAVVVSGLLQGMMGLLGSP) traverse the membrane as a helical segment. Over 186-187 (GH) the chain is Extracellular. The helical transmembrane segment at 188 to 208 (VFPHCGPLVLAPSLVVAGLSA) threads the bilayer. The Cytoplasmic portion of the chain corresponds to 209 to 211 (HRE). The helical transmembrane segment at 212 to 232 (VAQFCFTHWGLALLVILLMVV) threads the bilayer. Residues 233 to 266 (CSQHLGSCQFHVCPWRRASTSSTHTPLPVFRLLS) lie on the Extracellular side of the membrane. The helical transmembrane segment at 267 to 287 (VLIPVACVWIVSAFVGFSVIP) threads the bilayer. Residues 288 to 316 (QELSAPTKAPWIWLPHPGEWNWPLLTPRA) are Cytoplasmic-facing. The helical transmembrane segment at 317–337 (LAAGISMALAASTSSLGCYAL) threads the bilayer. The Extracellular segment spans residues 338–355 (CGRLLHLPPPPPHACSRG). A helical membrane pass occupies residues 356–376 (LSLEGLGSVLAGLLGSPMGTA). Over 377 to 394 (SSFPNVGKVGLIQAGSQQ) the chain is Cytoplasmic. Residues 395-414 (VAHLVGLLCVGLGLSPRLAQ) form a helical membrane-spanning segment. Residues 415-423 (LLTTIPLPV) are Extracellular-facing. The chain crosses the membrane as a helical span at residues 424 to 446 (VGGVLGVTQAVVLSAGFSSFYLA). The Cytoplasmic segment spans residues 447 to 452 (DIDSGR). Residues 453-472 (NIFIVGFSIFMALLLPRWFR) form a helical membrane-spanning segment. At 473–486 (EAPVLFSTGWSPLD) the chain is on the extracellular side. Residues 487-507 (VLLHSLLTQPIFLAGLSGFLL) form a helical membrane-spanning segment. Residues 508-610 (ENTIPGTQLE…SSREGFRSQK (103 aa)) lie on the Cytoplasmic side of the membrane. The disordered stretch occupies residues 571-610 (PEDPGDEEGGSSEPEEMADLLPGSGEPCPESSREGFRSQK). Positions 573 to 588 (DPGDEEGGSSEPEEMA) are enriched in acidic residues. Residues 601–610 (SSREGFRSQK) show a composition bias toward basic and acidic residues.

It belongs to the nucleobase:cation symporter-2 (NCS2) (TC 2.A.40) family.

Its subcellular location is the membrane. It catalyses the reaction hypoxanthine(out) + Na(+)(out) = hypoxanthine(in) + Na(+)(in). In terms of biological role, acts as a sodium-dependent hypoxanthine transporter. May show xanthine-hypoxanthine exchange activity. This chain is Solute carrier family 23 member 3 (SLC23A3), found in Homo sapiens (Human).